The sequence spans 283 residues: 2,3,4,5-tetrahydropyridine-2,6-dicarboxylate N-succinyltransferase (283 aa).

Residues Arg107 and Asp144 each contribute to the substrate site.

The protein belongs to the transferase hexapeptide repeat family. Homotrimer.

It localises to the cytoplasm. It carries out the reaction (S)-2,3,4,5-tetrahydrodipicolinate + succinyl-CoA + H2O = (S)-2-succinylamino-6-oxoheptanedioate + CoA. It functions in the pathway amino-acid biosynthesis; L-lysine biosynthesis via DAP pathway; LL-2,6-diaminopimelate from (S)-tetrahydrodipicolinate (succinylase route): step 1/3. The chain is 2,3,4,5-tetrahydropyridine-2,6-dicarboxylate N-succinyltransferase from Rhodospirillum rubrum (strain ATCC 11170 / ATH 1.1.1 / DSM 467 / LMG 4362 / NCIMB 8255 / S1).